A 485-amino-acid polypeptide reads, in one-letter code: Dipeptide and tripeptide permease C (485 aa).

Topologically, residues 1-12 (MKTPSQPRAIYY) are cytoplasmic. The helical transmembrane segment at 13–33 (IVAIQIWEYFSFYGMRALLIL) threads the bilayer. Topologically, residues 34–46 (YLTHQLGFDDNHA) are periplasmic. Residues 47-67 (ISLFSAYASLVYVTPILGGWL) form a helical membrane-spanning segment. Topologically, residues 68–70 (ADR) are cytoplasmic. The helical transmembrane segment at 71 to 93 (LLGNRTAVIAGALLMTLGHVVLG) threads the bilayer. Over 94 to 102 (IDTNSTFSL) the chain is Periplasmic. The helical transmembrane segment at 103–125 (YLALAIIICGYGLFKSNISCLLG) threads the bilayer. Residues 126-140 (ELYDENDHRRDGGFS) lie on the Cytoplasmic side of the membrane. A helical membrane pass occupies residues 141-161 (LLYAAGNIGSIAAPIACGLAA). Topologically, residues 162 to 164 (QWY) are periplasmic. The helical transmembrane segment at 165–185 (GWHVGFALAGGGMFIGLLIFL) threads the bilayer. Residues 186–208 (SGHRHFQSTRSMDKKALTSVKFA) are Cytoplasmic-facing. A helical membrane pass occupies residues 209-229 (LPVWSWLVVMLCLAPVFFTLL). The Periplasmic segment spans residues 230–234 (LENDW). Residues 235-255 (SGYLLAIVCLIAAQIIARMMI) form a helical membrane-spanning segment. Topologically, residues 256-262 (KFPEHRR) are cytoplasmic. Residues 263 to 283 (ALWQIVLLMFVGTLFWVLAQQ) traverse the membrane as a helical segment. Residues 284–307 (GGSTISLFIDRFVNRQAFNIEVPT) lie on the Periplasmic side of the membrane. The helical transmembrane segment at 308 to 328 (ALFQSVNAIAVMLAGVVLAWL) threads the bilayer. Residues 329–340 (ASPESRGNSTLR) are Cytoplasmic-facing. The chain crosses the membrane as a helical span at residues 341–361 (VWLKFAFGLLLMACGFMLLAF). The Periplasmic segment spans residues 362-375 (DARHAAADGQASMG). Residues 376-396 (VMISGLALMGFAELFIDPVAI) form a helical membrane-spanning segment. The Cytoplasmic portion of the chain corresponds to 397-406 (AQITRLKMSG). A helical transmembrane segment spans residues 407–427 (VLTGIYMLATGAVANWLAGVV). At 428 to 446 (AQQTTESQISGMAIAAYQR) the chain is on the periplasmic side. A helical transmembrane segment spans residues 447–467 (FFSQMGEWTLACVAIIVVLAF). Topologically, residues 468-485 (ATRFLFSTPTNMIQESND) are cytoplasmic.

Belongs to the major facilitator superfamily. Proton-dependent oligopeptide transporter (POT/PTR) (TC 2.A.17) family. As to quaternary structure, monomer.

Its subcellular location is the cell inner membrane. Its function is as follows. Proton-dependent permease that transports di- and tripeptides. Shows significantly higher specificity towards dipeptides than tripeptides. Has a preference for dipeptides with a C-terminal Lys residue. Can bind Ala-Lys, Lys-Ala, Ala-Ala. Can also transport alanine and trialanine. This chain is Dipeptide and tripeptide permease C, found in Escherichia coli (strain K12).